A 269-amino-acid polypeptide reads, in one-letter code: Formamidopyrimidine-DNA glycosylase (269 aa).

Proline 2 acts as the Schiff-base intermediate with DNA in catalysis. The active-site Proton donor is glutamate 3. Lysine 57 acts as the Proton donor; for beta-elimination activity in catalysis. DNA contacts are provided by histidine 90, arginine 109, and lysine 150. The segment at 235–269 (QVYGRKGEPCRVCGTPIVATKHAQRATFYCRHCQK) adopts an FPG-type zinc-finger fold. Arginine 259 functions as the Proton donor; for delta-elimination activity in the catalytic mechanism.

It belongs to the FPG family. In terms of assembly, monomer. It depends on Zn(2+) as a cofactor.

It carries out the reaction Hydrolysis of DNA containing ring-opened 7-methylguanine residues, releasing 2,6-diamino-4-hydroxy-5-(N-methyl)formamidopyrimidine.. The enzyme catalyses 2'-deoxyribonucleotide-(2'-deoxyribose 5'-phosphate)-2'-deoxyribonucleotide-DNA = a 3'-end 2'-deoxyribonucleotide-(2,3-dehydro-2,3-deoxyribose 5'-phosphate)-DNA + a 5'-end 5'-phospho-2'-deoxyribonucleoside-DNA + H(+). In terms of biological role, involved in base excision repair of DNA damaged by oxidation or by mutagenic agents. Acts as a DNA glycosylase that recognizes and removes damaged bases. Has a preference for oxidized purines, such as 7,8-dihydro-8-oxoguanine (8-oxoG). Has AP (apurinic/apyrimidinic) lyase activity and introduces nicks in the DNA strand. Cleaves the DNA backbone by beta-delta elimination to generate a single-strand break at the site of the removed base with both 3'- and 5'-phosphates. The protein is Formamidopyrimidine-DNA glycosylase of Salmonella paratyphi C (strain RKS4594).